We begin with the raw amino-acid sequence, 788 residues long: MITVVKRNGRIEPLDITKIQKYTKDATDNLEGVSQSELEVDARLQFRDKITTEEIQQTLIKTAVDKIDIDTPNWSFVASRLFLYDLYHKVSGFTGYRHLKEYFENAEEKGRILKGFKEKFDLEFLNSQIKPERDFQFNYLGIKTLYDRYLLKDANNNPIELPQHMFMSIAMFLAQNEQEPNKIALEFYEVLSKFEAMCATPTLANARTTKHQLSSCYIGSTPDNIEGIFDSYKEMALLSKYGGGIGWDFSLVRSIGSYIDGHKNASAGTIPFLKIANDVAIAVDQLGTRKGAIAVYLEIWHIDVMEFIDLRKNSGDERRRAHDLFPALWVCDLFLKRVLEDAMWTLFDPYECKDLTELYGQDFEKRYLEYEKDPKIIKEYINAKDLWKKILMNYFEAGLPFLAFKDNANRCNPNAHAGIIRSSNLCTEIFQNTAPNHYYMQIEYTDGTIEFFEEKELVTTDSNITKCANKLTSTDILKGKPIYIATKVAKDGQTAVCNLASINLSKINTEEDIKRVVPIMVRLLDNVIDLNFYPNRKVKATNLQNRAIGLGVMGEAQMLAEHQIAWGSKEHLEKIDALMEQISYHAIDTSANLAKEKGVYKDFENSEWSKGIFPIDKANNEALKLTEKGLFNHACDWQGLREKVKANGMRNGYLMAIAPTSSISILVGTTQTIEPIYKKKWFEENLSGLIPVVVPNLNVETWNFYTSAYDIDAKDLIKAAAVRQKWIDQGQSLNVFLRIENASGKTLHDIYTLAWKLGLKSTYYLRSESPSIDEKSVLDRSVECFNCQ.

In terms of domain architecture, ATP-cone spans 2–92 (ITVVKRNGRI…LYDLYHKVSG (91 aa)). ATP is bound by residues Lys-6, 12-18 (EPLDITK), and Thr-52. Position 200 (Thr-200) interacts with GDP. A disulfide bond links Cys-216 and Cys-497. DTTP contacts are provided by residues 223–225 (DNI) and Arg-253. Asn-424 lines the GDP pocket. The active-site Proton acceptor is the Asn-424. Cys-426 acts as the Cysteine radical intermediate in catalysis. GDP-binding positions include Glu-428 and 661–663 (SSI). Glu-428 functions as the Proton acceptor in the catalytic mechanism.

This sequence belongs to the ribonucleoside diphosphate reductase large chain family. In terms of assembly, tetramer of two alpha and two beta subunits.

The catalysed reaction is a 2'-deoxyribonucleoside 5'-diphosphate + [thioredoxin]-disulfide + H2O = a ribonucleoside 5'-diphosphate + [thioredoxin]-dithiol. Its activity is regulated as follows. Under complex allosteric control mediated by deoxynucleoside triphosphates and ATP binding to separate specificity and activation sites on the alpha subunit. The type of nucleotide bound at the specificity site determines substrate preference. It seems probable that ATP makes the enzyme reduce CDP and UDP, dGTP favors ADP reduction and dTTP favors GDP reduction. Stimulated by ATP and inhibited by dATP binding to the activity site. Its function is as follows. Provides the precursors necessary for DNA synthesis. Catalyzes the biosynthesis of deoxyribonucleotides from the corresponding ribonucleotides. In Helicobacter pylori (strain ATCC 700392 / 26695) (Campylobacter pylori), this protein is Ribonucleoside-diphosphate reductase subunit alpha (nrdA).